We begin with the raw amino-acid sequence, 165 residues long: Endoribonuclease YbeY (165 aa).

3 residues coordinate Zn(2+): His119, His123, and His129.

Belongs to the endoribonuclease YbeY family. Zn(2+) is required as a cofactor.

The protein localises to the cytoplasm. In terms of biological role, single strand-specific metallo-endoribonuclease involved in late-stage 70S ribosome quality control and in maturation of the 3' terminus of the 16S rRNA. This is Endoribonuclease YbeY from Streptomyces coelicolor (strain ATCC BAA-471 / A3(2) / M145).